The sequence spans 478 residues: Patatin-like phospholipase domain-containing protein 2 (478 aa).

Over 1–8 (MFPRETKW) the chain is Cytoplasmic. The helical transmembrane segment at 9-29 (NISFAGCGFLGVYHIGVASCL) threads the bilayer. The region spanning 10–179 (ISFAGCGFLG…SDNLPLYELK (170 aa)) is the PNPLA domain. Residues 14-19 (GCGFLG) carry the GXGXXG motif. At 30 to 42 (REHAPFLVANATH) the chain is on the extracellular side. An N-linked (GlcNAc...) asparagine glycan is attached at Asn-39. Residues 43-63 (IYGASAGALTATALVTGACLG) traverse the membrane as a helical segment. Residues 45-49 (GASAG) carry the GXSXG motif. The active-site Nucleophile is Ser-47. Topologically, residues 64–137 (EAGANIIEVS…IISHFSSKDE (74 aa)) are cytoplasmic. Lys-92 participates in a covalent cross-link: Glycyl lysine isopeptide (Lys-Gly) (interchain with G-Cter in ubiquitin). Residues 138 to 158 (LIQANVCSTFIPVYCGLIPPT) traverse the membrane as a helical segment. The Extracellular segment spans residues 159–323 (LQGVRYVDGG…TTLSNMLPVR (165 aa)). The active-site Proton acceptor is the Asp-166. A DGA/G motif is present at residues 166–168 (DGG). A helical transmembrane segment spans residues 324 to 344 (LATAMMVPYTLPLESAVSFTI). Over 345–478 (RLLEWLPDVP…PQDPSGLPPC (134 aa)) the chain is Cytoplasmic. Position 366 is a phosphoserine; in vitro (Ser-366). Ser-388 carries the phosphoserine; by PKA modification. A phosphoserine mark is found at Ser-398 and Ser-422. Residues 456-478 (RAPASPTATDPATPQDPSGLPPC) form a disordered region. Over residues 457–478 (APASPTATDPATPQDPSGLPPC) the composition is skewed to low complexity. Ser-460 is subject to Phosphoserine; in vitro.

In terms of assembly, interacts with ABHD5; this association stimulates PNPLA2 triglyceride hydrolase activity. Interacts with SERPINF1; this interaction stimulates the phospholipase A2 activity of PNPLA2. Despite a colocalization in lipid droplets, it probably does not interact with PLIN. Interacts with PLIN5; prevents interaction with ABHD5. Interacts with FAF2. Post-translationally, phosphorylation at Ser-398 by PKA is increased during fasting and moderate intensity exercise, and moderately increases lipolytic activity. In terms of processing, ubiquitinated by PEX2 in response to reactive oxygen species (ROS), leading to its degradation. Ubiquitination is stimulated by LDAH.

It is found in the lipid droplet. It localises to the cell membrane. Its subcellular location is the cytoplasm. It catalyses the reaction a triacylglycerol + H2O = a diacylglycerol + a fatty acid + H(+). The enzyme catalyses a triacylglycerol + H2O = a 1,2-diacylglycerol + a fatty acid + H(+). The catalysed reaction is a triacylglycerol + H2O = a 1,3-diacylglycerol + a fatty acid + H(+). It carries out the reaction a triacyl-sn-glycerol + H2O = a 1,3-diacyl-sn-glycerol + a fatty acid + H(+). It catalyses the reaction a triacyl-sn-glycerol + H2O = a 2,3-diacyl-sn-glycerol + a fatty acid + H(+). The enzyme catalyses a 1-acylglycerol + a 1,3-diacylglycerol = a triacylglycerol + glycerol. The catalysed reaction is a 1-acylglycerol + a 1,2-diacylglycerol = a triacylglycerol + glycerol. It carries out the reaction 2 a 1-acylglycerol = a 1,2-diacylglycerol + glycerol. It catalyses the reaction a triacylglycerol + all-trans-retinol = an all-trans-retinyl ester + a diacylglycerol. The enzyme catalyses 1,2-di-(9Z-octadecenoyl)-glycerol + (9Z)-octadecenoate + H(+) = 1,2,3-tri-(9Z-octadecenoyl)-glycerol + H2O. The catalysed reaction is 1,2,3-tri-(9Z-octadecenoyl)-glycerol + H2O = 1,3-di-(9Z-octadecenoyl)-glycerol + (9Z)-octadecenoate + H(+). It carries out the reaction 1-(9Z-octadecenoyl)-glycerol + 1,3-di-(9Z-octadecenoyl)-glycerol = 1,2,3-tri-(9Z-octadecenoyl)-glycerol + glycerol. It catalyses the reaction 1-(9Z-octadecenoyl)-glycerol + 1,2-di-(9Z-octadecenoyl)-glycerol = 1,2,3-tri-(9Z-octadecenoyl)-glycerol + glycerol. The enzyme catalyses 2 1-(9Z-octadecenoyl)-glycerol = 1,2-di-(9Z-octadecenoyl)-glycerol + glycerol. The catalysed reaction is 1,2,3-tri-(9Z-octadecenoyl)-glycerol + all-trans-retinol = all-trans-retinyl 9Z-octadecenoate + di-(9Z)-octadecenoylglycerol. It carries out the reaction 1,2,3-tri-(9Z)-hexadecenoylglycerol + H2O = 1,3-di-(9Z)-hexadecenoylglycerol + (9Z)-hexadecenoate + H(+). It catalyses the reaction 1,2,3-tri-(9Z,12Z)-octadecadienoylglycerol + H2O = 1,3-di-(9Z,12Z)-octadecadienoylglycerol + (9Z,12Z)-octadecadienoate + H(+). The enzyme catalyses 1,2,3-tri-(9Z,12Z,15Z)-octadecatrienoylglycerol + H2O = 1,3-di-(9Z,12Z,15Z)-octadecatrienoylglycerol + (9Z,12Z,15Z)-octadecatrienoate + H(+). The catalysed reaction is 1,3-di-(9Z)-octadecenoyl-2-hexadecanoylglycerol + H2O = 1,3-di-(9Z-octadecenoyl)-glycerol + hexadecanoate + H(+). It carries out the reaction 1,2-di-(9Z)-octadecenoyl-3-hexadecanoyl-sn-glycerol + H2O = 1-(9Z)-octadecenoyl-3-hexadecanoyl-sn-glycerol + (9Z)-octadecenoate + H(+). It catalyses the reaction 1-hexadecanoyl-2,3-di-(9Z)-octadecenoyl-sn-glycerol + H2O = 1-hexadecanoyl-3-(9Z)-octadecenoyl-sn-glycerol + (9Z)-octadecenoate + H(+). The enzyme catalyses 1,2,3-tri-(9Z-octadecenoyl)-glycerol + H2O = 2,3-di-(9Z)-octadecenoyl-sn-glycerol + (9Z)-octadecenoate + H(+). The catalysed reaction is 1,2,3-tri-(9Z)-hexadecenoylglycerol + H2O = 2,3-di-(9Z)-hexadecenoyl-sn-glycerol + (9Z)-hexadecenoate + H(+). It carries out the reaction 1,2,3-tri-(9Z,12Z)-octadecadienoylglycerol + H2O = 2,3-di-(9Z,12Z)-octadecadienoyl-sn-glycerol + (9Z,12Z)-octadecadienoate + H(+). It catalyses the reaction 1,2,3-tri-(9Z,12Z,15Z)-octadecatrienoylglycerol + H2O = 2,3-di-(9Z,12Z,15Z)-octadecatrienoyl-sn-glycerol + (9Z,12Z,15Z)-octadecatrienoate + H(+). The enzyme catalyses 1,3-di-(9Z)-octadecenoyl-2-hexadecanoylglycerol + H2O = 2-hexadecanoyl-3-(9Z)-octadecenoyl-sn-glycerol + (9Z)-octadecenoate + H(+). The catalysed reaction is 1-hexadecanoyl-2,3-di-(9Z)-octadecenoyl-sn-glycerol + H2O = 2,3-di-(9Z)-octadecenoyl-sn-glycerol + hexadecanoate + H(+). It carries out the reaction 1,2-di-(9Z)-octadecenoyl-3-hexadecanoyl-sn-glycerol + H2O = 2-(9Z-octadecenoyl)-3-hexadecanoyl-sn-glycerol + (9Z)-octadecenoate + H(+). It catalyses the reaction a 1,2-diacyl-sn-glycero-3-phosphocholine + H2O = a 1-acyl-sn-glycero-3-phosphocholine + a fatty acid + H(+). The enzyme catalyses 1,2,3-tri-(9Z-octadecenoyl)-glycerol + 9-hydroxy-octadecanoate = 9-(9Z-octadecenoyloxy)-octadecanoate + 2,3-di-(9Z)-octadecenoyl-sn-glycerol. The catalysed reaction is 1-hexadecanoyl-2,3-di-(9Z)-octadecenoyl-sn-glycerol + 9-hydroxy-octadecanoate = 9-hexadecanoyloxy-octadecanoate + 2,3-di-(9Z)-octadecenoyl-sn-glycerol. It carries out the reaction 1,2,3-tri-(10Z)-heptadecenoylglycerol + 9-hydroxy-octadecanoate = 2,3-di-(10Z-heptadecenoyl)-sn-glycerol + 9-(10Z-heptadecenoyloxy)-octadecanoate. It catalyses the reaction 1,2,3-tri-(9Z,12Z)-octadecadienoylglycerol + 9-hydroxy-octadecanoate = 2,3-di-(9Z,12Z)-octadecadienoyl-sn-glycerol + 9-(9Z,12Z-octadecadienoyloxy)-octadecanoate. The enzyme catalyses 1,2,3-tri-(9Z)-hexadecenoylglycerol + 9-hydroxy-octadecanoate = 2,3-di-(9Z)-hexadecenoyl-sn-glycerol + 9-(9Z-hexadecenoyloxy)-octadecanoate. The catalysed reaction is 9-hydroxy-octadecanoate + 1,2-di-(9Z-octadecenoyl)-sn-glycerol = 9-(9Z-octadecenoyloxy)-octadecanoate + 2-(9Z-octadecenoyl)-glycerol. It carries out the reaction 1-hexadecanoyl-2,3-di-(9Z)-octadecenoyl-sn-glycerol + 9-hydroxy-octadecanoate = 1-hexadecanoyl-3-(9Z)-octadecenoyl-sn-glycerol + 9-(9Z-octadecenoyloxy)-octadecanoate. The protein operates within glycerolipid metabolism; triacylglycerol degradation. Its function is as follows. Catalyzes the initial step in triglyceride hydrolysis in adipocyte and non-adipocyte lipid droplets. Exhibits a strong preference for the hydrolysis of long-chain fatty acid esters at the sn-2 position of the glycerol backbone and acts coordinately with LIPE/HLS and DGAT2 within the lipolytic cascade. Also possesses acylglycerol transacylase and phospholipase A2 activities. Transfers fatty acid from triglyceride to retinol, hydrolyzes retinylesters, and generates 1,3-diacylglycerol from triglycerides. Regulates adiposome size and may be involved in the degradation of adiposomes. Catalyzes the formation of an ester bond between hydroxy fatty acids and fatty acids derived from triglycerides or diglycerides to generate fatty acid esters of hydroxy fatty acids (FAHFAs) in adipocytes. Acts antagonistically with LDAH in regulation of cellular lipid stores. Inhibits LDAH-stimulated lipid droplet fusion. May play an important role in energy homeostasis. May play a role in the response of the organism to starvation, enhancing hydrolysis of triglycerides and providing free fatty acids to other tissues to be oxidized in situations of energy depletion. The polypeptide is Patatin-like phospholipase domain-containing protein 2 (Rattus norvegicus (Rat)).